Here is a 634-residue protein sequence, read N- to C-terminus: MNETVANNKETRGFQSEVKQLLHLMIHSLYSNKEIFLRELISNASDAADKLRFQALSNPALYENDAELGVKLSFNEEHNTLTISDNGIGMSREEVISHLGTIAKSGTAEFFSKLSQEQSKDSQLIGQFGVGFYSAFIVADAVTVRTRAAGLNADQAVLWHSAGEGEYTVEDITKESRGTDIILHMREDGKEFLNEWRLRDVIGKYSDHIGIPVSIQTRVRDEEGKETEEVKWEQINKAQALWTRNKSDISDEEYQEFYKHVSHDFADPLLWSHNRVEGKNDYTSLLYIPSKAPWDMMNRDHKSGLKLYVQRVFIMDDAEQFMPSYLRFVRGLIDSNDLPLNVSREILQDNKVTQSLRGACTKRVLTMLERLAKNDTEKYQTFWKEFGLVMKEGPAEDYANREKVAALLRFASTEVDSAEQTVSLESYVERMKEGQDKIYYLTADSYAAAKNSPHLEQFKAKGLEVILMFDRIDEWLMNYLTEFDGKQFQSITKAGLDLSQFEDEQEKEKQKETEQEFQSVVERTKSYLGDRVKEVRTTFKLANTPAVVVTDDFEMGTQMAKLLAAAGQAVPEVKYIFEINPNHTLVKQMADEADEEAFGRWVEVLLGQAMLAERGSMEDPSQFLTAINSLLTKG.

Residues 1–344 are a; substrate-binding; the sequence is MNETVANNKE…SNDLPLNVSR (344 aa). Residues 345–561 are b; it reads EILQDNKVTQ…DFEMGTQMAK (217 aa). The c stretch occupies residues 562–634; that stretch reads LLAAAGQAVP…TAINSLLTKG (73 aa).

This sequence belongs to the heat shock protein 90 family. Homodimer.

It localises to the cytoplasm. Its function is as follows. Molecular chaperone. Has ATPase activity. The sequence is that of Chaperone protein HtpG from Vibrio vulnificus (strain YJ016).